Reading from the N-terminus, the 65-residue chain is Large ribosomal subunit protein bL33c (65 aa).

This sequence belongs to the bacterial ribosomal protein bL33 family.

It is found in the plastid. It localises to the chloroplast. The sequence is that of Large ribosomal subunit protein bL33c from Gracilaria tenuistipitata var. liui (Red alga).